A 403-amino-acid polypeptide reads, in one-letter code: Large ribosomal subunit protein uL3 (403 aa).

Residues 1-37 (MSHRKFSAPRHGSLGFLPRKRSSRHRGKVKSFPKDDP) form a disordered region. Residue S13 is modified to Phosphoserine. Residues 18–31 (PRKRSSRHRGKVKS) show a composition bias toward basic residues. A Glycyl lysine isopeptide (Lys-Gly) (interchain with G-Cter in SUMO2) cross-link involves residue K39. K136 carries the post-translational modification N6-acetyllysine. Residues K224 and K226 each participate in a glycyl lysine isopeptide (Lys-Gly) (interchain with G-Cter in SUMO2) cross-link. H245 carries the tele-methylhistidine modification. 2 positions are modified to N6-acetyllysine; alternate: K286 and K294. Residue K286 forms a Glycyl lysine isopeptide (Lys-Gly) (interchain with G-Cter in SUMO2); alternate linkage. K294 is covalently cross-linked (Glycyl lysine isopeptide (Lys-Gly) (interchain with G-Cter in SUMO1); alternate). Residue S304 is modified to Phosphoserine. K366 is modified (N6-acetyllysine; alternate). Residue K366 forms a Glycyl lysine isopeptide (Lys-Gly) (interchain with G-Cter in SUMO2); alternate linkage. K373 is modified (N6-acetyllysine). Glycyl lysine isopeptide (Lys-Gly) (interchain with G-Cter in SUMO2) cross-links involve residues K386, K393, and K399.

The protein belongs to the universal ribosomal protein uL3 family. Component of the large ribosomal subunit. Interacts with DHX33. Post-translationally, constitutively monomethylated at His-245 by METTL18. Methylation at His-245 regulates translation elongation by slowing ribosome traversal on tyrosine codons: slower elongation provides enough time for proper folding of synthesized proteins and prevents cellular aggregation of tyrosine-rich proteins. It is not required for incorporation of RPL3 into ribosomes.

It localises to the nucleus. It is found in the nucleolus. The protein localises to the cytoplasm. Its function is as follows. Component of the large ribosomal subunit. The ribosome is a large ribonucleoprotein complex responsible for the synthesis of proteins in the cell. The polypeptide is Large ribosomal subunit protein uL3 (Rpl3) (Rattus norvegicus (Rat)).